The sequence spans 125 residues: Large ribosomal subunit protein bL12 (125 aa).

A disordered region spans residues 96 to 125 (PAPVKEGATKDEAEEIKKKIEEAGGTAELK). Over residues 102–117 (GATKDEAEEIKKKIEE) the composition is skewed to basic and acidic residues.

The protein belongs to the bacterial ribosomal protein bL12 family. In terms of assembly, homodimer. Part of the ribosomal stalk of the 50S ribosomal subunit. Forms a multimeric L10(L12)X complex, where L10 forms an elongated spine to which 2 to 4 L12 dimers bind in a sequential fashion. Binds GTP-bound translation factors.

In terms of biological role, forms part of the ribosomal stalk which helps the ribosome interact with GTP-bound translation factors. Is thus essential for accurate translation. The protein is Large ribosomal subunit protein bL12 of Alcanivorax borkumensis (strain ATCC 700651 / DSM 11573 / NCIMB 13689 / SK2).